The chain runs to 587 residues: Proline-rich protein 14 (587 aa).

Position 1 is an N-acetylmethionine (Met-1). Residues 1–11 show a composition bias toward polar residues; it reads MDLPGDSSTPG. Disordered regions lie at residues 1 to 48, 65 to 152, and 181 to 241; these read MDLP…EKAS, VPLE…HQPT, and ARRA…RPRL. Residues 1–135 are sufficient for heterochromatin association in interphase and chromatin association in anaphase; that stretch reads MDLPGDSSTP…TPRRQSRTTP (135 aa). The tract at residues 85–378 is required for the interaction with GRB2 and sufficient to promote the phosphorylation of AKT and cell proliferation; the sequence is SVRSQPPASP…MAKAPPPPRP (294 aa). Positions 136–365 are required for nuclear lamina association; sequence GPDEGPSQKV…RPRPRRHTVG (230 aa). Residues 200-214 are compositionally biased toward low complexity; the sequence is LPAPSRPSALSANPL. The span at 215–234 shows a compositional bias: pro residues; it reads ASPPPAPDPVLEPPSTPPPS. Ser-277 carries the post-translational modification Phosphoserine. Disordered stretches follow at residues 290-444 and 524-587; these read EAGQ…IGKV and FRDS…PHRT. The span at 314 to 325 shows a compositional bias: polar residues; sequence AQDQNPSATLTK. Pro residues predominate over residues 337–356; that stretch reads LGPPGPDPCSWPPVPAPSSR. Positions 398–410 are enriched in low complexity; it reads TSCSSTASTSSFS. The interval 519–536 is required for nuclear localization; sequence RRTVEFRDSSLPRSRRPS. Positions 538 to 548 are enriched in low complexity; the sequence is GARATAGRTLP. Acidic residues predominate over residues 572 to 581; that stretch reads LLEEEEEGDQ.

Interacts (via proline-rich region) with GRB2 (via SH3 domain 2). Interacts (via N-terminus) with CBX5.

Its subcellular location is the chromosome. It localises to the nucleus. The protein localises to the nucleus lamina. It is found in the nucleoplasm. In terms of biological role, functions in tethering peripheral heterochromatin to the nuclear lamina during interphase, possibly through the interaction with heterochromatin protein CBX5/HP1 alpha. Might play a role in reattaching heterochromatin to the nuclear lamina at mitotic exit. Promotes myoblast differentiation during skeletal myogenesis, possibly by stimulating transcription factor MyoD activity via binding to CBX5/HP1 alpha. Involved in the positive regulation of the PI3K-Akt-mTOR signaling pathway and in promoting cell proliferation, possibly via binding to GRB2. This is Proline-rich protein 14 (PRR14) from Bos taurus (Bovine).